The sequence spans 210 residues: Ras-related protein Rab-43 (210 aa).

GTP is bound at residue 23-30; the sequence is GDASVGKT. Residues 45 to 53 carry the Effector region motif; sequence QGSTIGVDF. Position 47 is a phosphoserine (serine 47). Residue 71 to 75 participates in GTP binding; it reads DTAGQ. Position 80 is a phosphothreonine (threonine 80). Residues 129 to 132 and 161 to 162 each bind GTP; these read NKSD and AK. S-geranylgeranyl cysteine attachment occurs at residues cysteine 208 and cysteine 210. Cysteine 210 carries the cysteine methyl ester modification.

The protein belongs to the small GTPase superfamily. Rab family. Interacts with GDI1, GDI2 and CHM; phosphorylation at Thr-80 disrupts these interactions.

The protein localises to the cytoplasmic vesicle. The protein resides in the phagosome. It localises to the phagosome membrane. Its subcellular location is the golgi apparatus. It is found in the trans-Golgi network membrane. The protein localises to the trans-Golgi network. Its function is as follows. The small GTPases Rab are key regulators of intracellular membrane trafficking, from the formation of transport vesicles to their fusion with membranes. Rabs cycle between an inactive GDP-bound form and an active GTP-bound form that is able to recruit to membranes different set of downstream effectors directly responsible for vesicle formation, movement, tethering and fusion. The low intrinsic GTPase activity of RAB43 is activated by USP6NL. Involved in retrograde transport from the endocytic pathway to the Golgi apparatus. Involved in the transport of Shiga toxin from early and recycling endosomes to the trans-Golgi network. Required for the structural integrity of the Golgi complex. Plays a role in the maturation of phagosomes that engulf pathogens, such as S.aureus and Mycobacterium. This is Ras-related protein Rab-43 (Rab43) from Rattus norvegicus (Rat).